Reading from the N-terminus, the 148-residue chain is Truncated transcription factor CAULIFLOWER C (148 aa).

The region spanning 1-61 (MGRGRVEMKR…GKLFEYSSES (61 aa)) is the MADS-box domain. Residues 90–148 (QTNWSMEYSRLKAKIELWERNQRHYLGEDLESISIKELQNLEQQLDTSLKHIPSRKVCK) enclose the K-box; partial domain.

In terms of assembly, homodimer capable of binding to CArG-box sequences.

The protein resides in the nucleus. Probable transcription factor that promotes early floral meristem identity in synergy with APETALA1, FRUITFULL and LEAFY. Is required subsequently for the transition of an inflorescence meristem into a floral meristem. Seems to be partially redundant to the function of APETALA1. The sequence is that of Truncated transcription factor CAULIFLOWER C (CAL-C) from Brassica oleracea var. botrytis (Cauliflower).